A 43-amino-acid polypeptide reads, in one-letter code: Photosystem II reaction center protein Psb30 (43 aa).

The chain crosses the membrane as a helical span at residues 15–35 (VIFQLTFVSLILISGPVVIFL).

It belongs to the Psb30/Ycf12 family. As to quaternary structure, PSII is composed of 1 copy each of membrane proteins PsbA, PsbB, PsbC, PsbD, PsbE, PsbF, PsbH, PsbI, PsbJ, PsbK, PsbL, PsbM, PsbT, PsbX, PsbY, PsbZ, Psb30/Ycf12, peripheral proteins PsbO, CyanoQ (PsbQ), PsbU, PsbV and a large number of cofactors. It forms dimeric complexes.

It localises to the cellular thylakoid membrane. Its function is as follows. A core subunit of photosystem II (PSII), probably helps stabilize the reaction center. The polypeptide is Photosystem II reaction center protein Psb30 (Picosynechococcus sp. (strain ATCC 27264 / PCC 7002 / PR-6) (Agmenellum quadruplicatum)).